The primary structure comprises 473 residues: Photosystem II CP43 reaction center protein (473 aa).

Residues 1-14 constitute a propeptide that is removed on maturation; the sequence is MKTLYSPRRFYPVE. Residue Thr15 is modified to N-acetylthreonine. Thr15 carries the phosphothreonine modification. 5 consecutive transmembrane segments (helical) span residues 69–93, 134–155, 178–200, 255–275, and 291–312; these read LFEVAHFIPEKPMYEQGLILLPHLA, LIGPETLEESFPFFGYTWKDRN, KALFFGGIYDTWAPGGGDVRKIT, KPFAWTRRAFVWSGEAYLSYS, and WFNNTAYPSEFYGPTGPEASQA. Glu367 contributes to the [CaMn4O5] cluster binding site. Residues 447 to 471 traverse the membrane as a helical segment; sequence RARAAAAGFEKGIDRDLEPVLFMTP.

This sequence belongs to the PsbB/PsbC family. PsbC subfamily. In terms of assembly, PSII is composed of 1 copy each of membrane proteins PsbA, PsbB, PsbC, PsbD, PsbE, PsbF, PsbH, PsbI, PsbJ, PsbK, PsbL, PsbM, PsbT, PsbX, PsbY, PsbZ, Psb30/Ycf12, at least 3 peripheral proteins of the oxygen-evolving complex and a large number of cofactors. It forms dimeric complexes. It depends on Binds multiple chlorophylls and provides some of the ligands for the Ca-4Mn-5O cluster of the oxygen-evolving complex. It may also provide a ligand for a Cl- that is required for oxygen evolution. PSII binds additional chlorophylls, carotenoids and specific lipids. as a cofactor.

Its subcellular location is the plastid. The protein resides in the chloroplast thylakoid membrane. Functionally, one of the components of the core complex of photosystem II (PSII). It binds chlorophyll and helps catalyze the primary light-induced photochemical processes of PSII. PSII is a light-driven water:plastoquinone oxidoreductase, using light energy to abstract electrons from H(2)O, generating O(2) and a proton gradient subsequently used for ATP formation. The sequence is that of Photosystem II CP43 reaction center protein from Gnetum parvifolium (Small-leaved jointfir).